The following is a 142-amino-acid chain: Large ribosomal subunit protein uL13 (142 aa).

This sequence belongs to the universal ribosomal protein uL13 family. In terms of assembly, part of the 50S ribosomal subunit.

This protein is one of the early assembly proteins of the 50S ribosomal subunit, although it is not seen to bind rRNA by itself. It is important during the early stages of 50S assembly. This Bordetella bronchiseptica (strain ATCC BAA-588 / NCTC 13252 / RB50) (Alcaligenes bronchisepticus) protein is Large ribosomal subunit protein uL13.